Here is a 1305-residue protein sequence, read N- to C-terminus: Rho GTPase-activating protein 33 (1305 aa).

The tract at residues 1–64 (MLQAQKQSDP…KPGKRLSAPR (64 aa)) is disordered. S32 is subject to Phosphoserine. Positions 83–192 (FGHIQLLLSP…CGPVLTWMEL (110 aa)) constitute a PX; atypical domain. The SH3 domain maps to 210–272 (PAVAAAHVVK…PSECVELFTE (63 aa)). In terms of domain architecture, Rho-GAP spans 339–534 (CDLGEHLSNS…FLLTHVEVLF (196 aa)). Disordered regions lie at residues 575 to 818 (RTQG…LDIS), 864 to 1054 (LSDT…SFFS), and 1115 to 1305 (SYSG…RSYC). Low complexity predominate over residues 582–595 (TPTEPTTPKTPASP). A Phosphoserine modification is found at S594. Positions 596 to 608 (VERRKRERAEKQR) are enriched in basic and acidic residues. Positions 646 to 669 (SGSRPDTVTLRSAKSEESLSSQAS) are enriched in polar residues. Position 660 is a phosphoserine (S660). A compositionally biased stretch (low complexity) spans 694–733 (APAGSCESLSSSSSSSSSSSSSSSSESSAGGLGPLSGSPS). The residue at position 749 (S749) is a Phosphoserine. Over residues 774 to 786 (PGDPAPPASPAPP) the composition is skewed to pro residues. The span at 787–798 (ASASAFPPRATP) shows a compositional bias: low complexity. The span at 864-873 (LSDTCQQEIS) shows a compositional bias: polar residues. Over residues 895–915 (LLPPPLPLLRPGGAPPPPPKN) the composition is skewed to pro residues. The segment covering 916–940 (PARLMALALAERAQQVAEQQSQQEQ) has biased composition (low complexity). Composition is skewed to polar residues over residues 992–1020 (RQQS…SQVS), 1039–1054 (SPCS…SFFS), and 1115–1125 (SYSGPSRSWSP). Y1188 is modified (phosphotyrosine). Residues 1194 to 1208 (GPRGPSPASSSSSSP) are compositionally biased toward low complexity. Residue R1263 is modified to Omega-N-methylarginine. Residues 1292–1305 (SWSLHSEGQTRSYC) show a composition bias toward polar residues.

This sequence belongs to the PX domain-containing GAP family. Specifically interacts with CDC42 and RHOQ/TC10 through its Rho-GAP domain. Interacts with NEK6. In terms of tissue distribution, highly expressed in brain and testis. Also expressed in white adipose tissue (WAT) and muscle at a low level.

It localises to the cell membrane. In terms of biological role, may be involved in several stages of intracellular trafficking. Could play an important role in the regulation of glucose transport by insulin. May act as a downstream effector of RHOQ/TC10 in the regulation of insulin-stimulated glucose transport. This is Rho GTPase-activating protein 33 (Arhgap33) from Mus musculus (Mouse).